Reading from the N-terminus, the 254-residue chain is Winged helix repair factor 1 (254 aa).

The Bipartite nuclear localization signal motif lies at K4 to R21. Winged helix domain regions lie at residues E32–F104, P120–P179, and G180–T254.

The protein belongs to the STK19 family. As to quaternary structure, monomer in solution. Homodimer; when bound to DNA. Component of a transcription-coupled nucleotide excision repair (TC-NER) complex composed of STK19, ERCC6, ERCC8, DDA1, DDB1, ELOF1 and UVSSA which assembles and interacts with the multiprotein RNA polymerase II complex when it stalls at DNA lesions. Monocytes, hepatocytes, epithelial cells, T- and B-lymphocytes.

Its subcellular location is the nucleus. It is found in the cytoplasm. Functionally, DNA-binding protein which is required for efficient transcription-coupled nucleotide excision repair (TC-NER). Acts as part of a TC-NER complex which assembles and interacts with RNA polymerase II (RNAPII) when it stalls at DNA lesions. TC-NER complex subunit UVSSA binds to the GTF2H1/p62 subunit of the TFIIH transcription factor complex, tethering TFIIH to the TC-NER complex. WHR1/STK19 then interacts with the XPD helicase subunit of TFIIH which guides TFIIH to DNA downstream of the stalled RNAPII, ensuring DNA repair. Directly interacts with RNAPII and also binds to downstream DNA. Promotes the timely removal of DNA damage-stalled RNAPII, allowing downstream NER factors to access DNA lesions. Required for monoubiquitination of UVSSA. Regulates repositioning and stabilization of UVSSA within the TC-NER complex. Stimulates ubiquitination of RNAPII complex member RBP1. Also binds to RNA and regulates the expression levels of many mRNAs. The protein is Winged helix repair factor 1 of Homo sapiens (Human).